Reading from the N-terminus, the 324-residue chain is Putative transcription factor sel-7 (324 aa).

A compositionally biased stretch (polar residues) spans 67–85 (SPPQTVISEAPPQSFTPSA). The segment at 67–151 (SPPQTVISEA…DEKVLADGPF (85 aa)) is disordered. The span at 86–98 (TNSTSDKTSSSLK) shows a compositional bias: low complexity. A compositionally biased stretch (acidic residues) spans 106–123 (SDGDLDMEGEEDTEELFD). The segment covering 124-133 (NESQPSQRNQ) has biased composition (polar residues). The segment covering 134–146 (SPKETEVEDEKVL) has biased composition (basic and acidic residues).

In terms of assembly, multimer. May interact with mediator complex subunit mdt-29. Widely expressed, including in pharyngeal muscle cells and body wall muscle cells.

The protein localises to the nucleus. Its function is as follows. Putative transcription factor. Positive regulator of the lin-12/Notch signaling pathway. Binds to specific DNA sequences in regulatory elements. Involved in cell fate decisions that require cell-cell interactions, such as the anchor cell (AC) / ventral uterine (VU) precursor cell fate decision. Heterochronic protein which controls the choice of stage specific cell fates, including the larval L3 stage-specific fate of seam cells. Involved in regulating the temporal expression pattern of hunchback-like protein hbl-1, thereby playing a role in the progression between larval stages L2 and L3. This chain is Putative transcription factor sel-7, found in Caenorhabditis elegans.